Here is a 569-residue protein sequence, read N- to C-terminus: Phospholipase B-like protein D (569 aa).

The first 22 residues, 1-22 (MIIFKNLLKLLIILLTIKLYFC), serve as a signal peptide directing secretion. Residues Asn-93, Asn-126, Asn-181, Asn-425, and Asn-430 are each glycosylated (N-linked (GlcNAc...) asparagine).

The protein belongs to the phospholipase B-like family.

The protein localises to the secreted. Its function is as follows. Probable phospholipase. The protein is Phospholipase B-like protein D (plbD) of Dictyostelium discoideum (Social amoeba).